The following is an 818-amino-acid chain: BDNF/NT-3 growth factors receptor (818 aa).

The N-terminal stretch at 1–31 (MVSWRRRPGPGLARLWGLCCLVLGCWRGALG) is a signal peptide. 2 cysteine pairs are disulfide-bonded: Cys-32-Cys-38 and Cys-36-Cys-45. Over 32–426 (CPASCRCSSW…DVSNKENEDS (395 aa)) the chain is Extracellular. An N-linked (GlcNAc...) asparagine glycan is attached at Asn-66. The LRR 1 repeat unit spans residues 71–92 (YIANQRKLESINDNEVGFYVGL). Residue Asn-94 is glycosylated (N-linked (GlcNAc...) asparagine). The LRR 2 repeat unit spans residues 95–116 (LTVVDSGLRFVSRQAFVKNINL). An N-linked (GlcNAc...) asparagine glycan is attached at Asn-120. 2 cysteine pairs are disulfide-bonded: Cys-151/Cys-175 and Cys-153/Cys-193. In terms of domain architecture, Ig-like C2-type 1 spans 196 to 281 (PSANLSNYNI…GEVQTSAELT (86 aa)). 7 N-linked (GlcNAc...) asparagine glycosylation sites follow: Asn-199, Asn-204, Asn-226, Asn-253, Asn-287, Asn-324, and Asn-337. A disulfide bridge connects residues Cys-217 and Cys-265. One can recognise an Ig-like C2-type 2 domain in the interval 295–364 (TPDHHWCIPF…NGAYTLLAKN (70 aa)). Cysteines 301 and 344 form a disulfide. The tract at residues 384 to 394 (GSGPIVDPDVY) is provides specificity for BDNF as ligand versus NTF3 and NTF4. The segment covering 400–418 (PNDLGDTTNNSNQITSPDV) has biased composition (polar residues). Residues 400–420 (PNDLGDTTNNSNQITSPDVSN) form a disordered region. Asn-408 carries an N-linked (GlcNAc...) asparagine glycan. A helical membrane pass occupies residues 427-450 (ITVYVVVGIAALVCTGLVIMLIIL). The Cytoplasmic portion of the chain corresponds to 451 to 818 (KFGRHSKFGM…ASPVYLDILG (368 aa)). Residues 469–494 (NDDDSASPLHHISNGSNTPSSSEGGP) are disordered. Over residues 481-491 (SNGSNTPSSSE) the composition is skewed to polar residues. Phosphotyrosine; by autocatalysis is present on Tyr-512. A Protein kinase domain is found at 534–803 (IVLKRELGEG…LNIKEIHSLL (270 aa)). ATP-binding positions include 540–548 (LGEGAFGKV) and Lys-568. Asp-672 serves as the catalytic Proton acceptor. Phosphotyrosine; by autocatalysis is present on residues Tyr-698, Tyr-702, Tyr-703, and Tyr-813.

It belongs to the protein kinase superfamily. Tyr protein kinase family. Insulin receptor subfamily. Exists in a dynamic equilibrium between monomeric (low affinity) and dimeric (high affinity) structures. Interacts (phosphorylated upon activation by BDNF) with SHC1; mediates SHC1 phosphorylation and activation. Interacts (phosphorylated upon activation by BDNF) with PLCG1 and/or PLCG2; mediates PLCG1 phosphorylation and activation. Interacts with SH2B1 and SH2B2. Interacts with NGFR; may regulate the ligand specificity of the receptor. Interacts with SORCS2; this interaction is important for normal targeting to post-synaptic densities in response to high-frequency stimulation. Interacts (phosphorylated upon ligand-binding) with SH2D1A; regulates NTRK2. Interacts with SQSTM1 and KIDINS220. Interacts (phosphorylated upon ligand-binding) with FRS2; activates the MAPK signaling pathway. Interacts with APPL1. Interacts with MAPK8IP3/JIP3 and KLC1; interaction with KLC1 is mediated by MAPK8IP3/JIP3. In terms of processing, ligand-mediated auto-phosphorylation. As to expression, detected in embryonic brain and orsal root ganglia.

The protein localises to the cell membrane. It localises to the endosome membrane. The protein resides in the cell projection. It is found in the axon. Its subcellular location is the dendrite. The protein localises to the cytoplasm. It localises to the perinuclear region. The protein resides in the postsynaptic density. The enzyme catalyses L-tyrosyl-[protein] + ATP = O-phospho-L-tyrosyl-[protein] + ADP + H(+). The neuronal activity and the influx of calcium positively regulate the kinase activity and the internalization of the receptor which are both important for active signaling. Regulated by NGFR that may control the internalization of the receptor. NGFR may also stimulate the activation by BDNF compared to NTF3 and NTF4. The formation of active receptors dimers able to fully transduce the ligand-mediated signal, may be negatively regulated by the formation of inactive heterodimers with the non-catalytic isoforms. Functionally, receptor tyrosine kinase involved in the development and the maturation of the central and the peripheral nervous systems through regulation of neuron survival, proliferation, migration, differentiation, and synapse formation and plasticity. Receptor for BDNF/brain-derived neurotrophic factor and NTF4/neurotrophin-4. Alternatively can also bind NTF3/neurotrophin-3 which is less efficient in activating the receptor but regulates neuron survival through NTRK2. Upon ligand-binding, undergoes homodimerization, autophosphorylation and activation. Recruits, phosphorylates and/or activates several downstream effectors including SHC1, FRS2, SH2B1, SH2B2 and PLCG1 that regulate distinct overlapping signaling cascades. Through SHC1, FRS2, SH2B1, SH2B2 activates the GRB2-Ras-MAPK cascade that regulates for instance neuronal differentiation including neurite outgrowth. Through the same effectors controls the Ras-PI3 kinase-AKT1 signaling cascade that mainly regulates growth and survival. Through PLCG1 and the downstream protein kinase C-regulated pathways controls synaptic plasticity. Thereby, plays a role in learning and memory by regulating both short term synaptic function and long-term potentiation. PLCG1 also leads to NF-Kappa-B activation and the transcription of genes involved in cell survival. Hence, it is able to suppress anoikis, the apoptosis resulting from loss of cell-matrix interactions. May also play a role in neutrophin-dependent calcium signaling in glial cells and mediate communication between neurons and glia. The chain is BDNF/NT-3 growth factors receptor (NTRK2) from Gallus gallus (Chicken).